A 206-amino-acid polypeptide reads, in one-letter code: Small ribosomal subunit protein uS3 (206 aa).

The KH type-2 domain maps to 39-107 (IRSYINESFK…SVEVNVVGVK (69 aa)).

The protein belongs to the universal ribosomal protein uS3 family. As to quaternary structure, part of the 30S ribosomal subunit. Forms a tight complex with proteins S10 and S14.

Its function is as follows. Binds the lower part of the 30S subunit head. Binds mRNA in the 70S ribosome, positioning it for translation. The chain is Small ribosomal subunit protein uS3 from Wolbachia pipientis subsp. Culex pipiens (strain wPip).